A 76-amino-acid polypeptide reads, in one-letter code: UPF0291 protein BT9727_1737 (76 aa).

It belongs to the UPF0291 family.

The protein localises to the cytoplasm. The sequence is that of UPF0291 protein BT9727_1737 from Bacillus thuringiensis subsp. konkukian (strain 97-27).